Here is a 76-residue protein sequence, read N- to C-terminus: Acyl carrier protein (76 aa).

The 75-residue stretch at 1 to 75 (MVFEKIKALI…DIVFYITKNT (75 aa)) folds into the Carrier domain. Ser35 carries the O-(pantetheine 4'-phosphoryl)serine modification.

This sequence belongs to the acyl carrier protein (ACP) family. 4'-phosphopantetheine is transferred from CoA to a specific serine of apo-ACP by AcpS. This modification is essential for activity because fatty acids are bound in thioester linkage to the sulfhydryl of the prosthetic group.

It is found in the cytoplasm. It functions in the pathway lipid metabolism; fatty acid biosynthesis. In terms of biological role, carrier of the growing fatty acid chain in fatty acid biosynthesis. In Onion yellows phytoplasma (strain OY-M), this protein is Acyl carrier protein.